Consider the following 505-residue polypeptide: Maturase K (505 aa).

It belongs to the intron maturase 2 family. MatK subfamily.

It localises to the plastid. Its subcellular location is the chloroplast. Usually encoded in the trnK tRNA gene intron. Probably assists in splicing its own and other chloroplast group II introns. The chain is Maturase K from Morus alba (White mulberry).